The following is a 116-amino-acid chain: MSLSSLLKVVTASLWLGPGIAQKITQTQPGMFVQEKEAVTLDCTYDTSDPSYGLFWYKQPSSGEMIFLIYQGSYDQQNATEGRYSLNFQKARKSANLVISASQLGDSAMYFCAMRE.

The signal sequence occupies residues 1 to 21 (MSLSSLLKVVTASLWLGPGIA). An Ig-like domain is found at 22 to 116 (QKITQTQPGM…SAMYFCAMRE (95 aa)). Cys43 and Cys112 are oxidised to a cystine. A glycan (N-linked (GlcNAc...) asparagine) is linked at Asn78.

In terms of assembly, alpha-beta TR is a heterodimer composed of an alpha and beta chain; disulfide-linked. The alpha-beta TR is associated with the transmembrane signaling CD3 coreceptor proteins to form the TR-CD3 (TcR or TCR). The assembly of alpha-beta TR heterodimers with CD3 occurs in the endoplasmic reticulum where a single alpha-beta TR heterodimer associates with one CD3D-CD3E heterodimer, one CD3G-CD3E heterodimer and one CD247 homodimer forming a stable octameric structure. CD3D-CD3E and CD3G-CD3E heterodimers preferentially associate with TR alpha and TR beta chains, respectively. The association of the CD247 homodimer is the last step of TcR assembly in the endoplasmic reticulum and is required for transport to the cell surface.

The protein localises to the cell membrane. V region of the variable domain of T cell receptor (TR) alpha chain that participates in the antigen recognition. Alpha-beta T cell receptors are antigen specific receptors which are essential to the immune response and are present on the cell surface of T lymphocytes. Recognize peptide-major histocompatibility (MH) (pMH) complexes that are displayed by antigen presenting cells (APC), a prerequisite for efficient T cell adaptive immunity against pathogens. Binding of alpha-beta TR to pMH complex initiates TR-CD3 clustering on the cell surface and intracellular activation of LCK that phosphorylates the ITAM motifs of CD3G, CD3D, CD3E and CD247 enabling the recruitment of ZAP70. In turn ZAP70 phosphorylates LAT, which recruits numerous signaling molecules to form the LAT signalosome. The LAT signalosome propagates signal branching to three major signaling pathways, the calcium, the mitogen-activated protein kinase (MAPK) kinase and the nuclear factor NF-kappa-B (NF-kB) pathways, leading to the mobilization of transcription factors that are critical for gene expression and essential for T cell growth and differentiation. The T cell repertoire is generated in the thymus, by V-(D)-J rearrangement. This repertoire is then shaped by intrathymic selection events to generate a peripheral T cell pool of self-MH restricted, non-autoaggressive T cells. Post-thymic interaction of alpha-beta TR with the pMH complexes shapes TR structural and functional avidity. This is T cell receptor alpha variable 14/delta variable 4 from Homo sapiens (Human).